The primary structure comprises 845 residues: Alanine--tRNA ligase (845 aa).

Zn(2+)-binding residues include His-552, His-556, Cys-653, and His-657.

Belongs to the class-II aminoacyl-tRNA synthetase family. The cofactor is Zn(2+).

It localises to the cytoplasm. It carries out the reaction tRNA(Ala) + L-alanine + ATP = L-alanyl-tRNA(Ala) + AMP + diphosphate. Catalyzes the attachment of alanine to tRNA(Ala) in a two-step reaction: alanine is first activated by ATP to form Ala-AMP and then transferred to the acceptor end of tRNA(Ala). Also edits incorrectly charged Ser-tRNA(Ala) and Gly-tRNA(Ala) via its editing domain. The polypeptide is Alanine--tRNA ligase (Campylobacter fetus subsp. fetus (strain 82-40)).